The primary structure comprises 178 residues: ATP-dependent protease subunit HslV (178 aa).

Thr7 is a catalytic residue. Residues Gly162, Cys165, and Thr168 each coordinate Na(+).

Belongs to the peptidase T1B family. HslV subfamily. As to quaternary structure, a double ring-shaped homohexamer of HslV is capped on each side by a ring-shaped HslU homohexamer. The assembly of the HslU/HslV complex is dependent on binding of ATP.

It localises to the cytoplasm. It catalyses the reaction ATP-dependent cleavage of peptide bonds with broad specificity.. Allosterically activated by HslU binding. Its function is as follows. Protease subunit of a proteasome-like degradation complex believed to be a general protein degrading machinery. The protein is ATP-dependent protease subunit HslV of Paraburkholderia xenovorans (strain LB400).